A 335-amino-acid chain; its full sequence is Probable UDP-N-acetylglucosamine pyrophosphorylase (335 aa).

The Substrate binding motif lies at 45–48 (LSGG). UTP contacts are provided by residues 45–48 (LSGG), K59, Q120, and G145. Position 146 (N146) interacts with substrate. D170 is a binding site for UTP. A Substrate binding motif is present at residues 218 to 219 (EY). K278 contacts UTP. Residue K308 participates in substrate binding.

This sequence belongs to the UDPGP type 1 family.

It is found in the cytoplasm. The enzyme catalyses N-acetyl-alpha-D-glucosamine 1-phosphate + UTP + H(+) = UDP-N-acetyl-alpha-D-glucosamine + diphosphate. The protein operates within nucleotide-sugar biosynthesis; UDP-N-acetyl-alpha-D-glucosamine biosynthesis; UDP-N-acetyl-alpha-D-glucosamine from N-acetyl-alpha-D-glucosamine 1-phosphate: step 1/1. The protein is Probable UDP-N-acetylglucosamine pyrophosphorylase (UAP1) of Encephalitozoon cuniculi (strain GB-M1) (Microsporidian parasite).